We begin with the raw amino-acid sequence, 300 residues long: MTAVVLDGVATASAVKSELAVRIRALREQGLVPGLGTLLVGDDPGSRAYVAGKHRDCAEVGIESIRVDLPADATEADVRLAIERLNSDPAVTGYIVQLPLPAGIDENAMLELIDPSKDADGLHPTNLGRLVLGVQGELTSPLPCTPAGIVEMLQRYEVPIAGQHVVVVGRGLTVGRPLGLLLTRKGLDATVTLTHSRTRDLEQEVRRADIVVAAVGVAHLIKPEWVKPGAAVLDVGITRVVDPETGKARLTGDVDPAVAEVAGHLSPNPRGVGPMTRAMLLANVVQAAERDARLAAELRG.

Residues 169-171, serine 196, and isoleucine 237 contribute to the NADP(+) site; that span reads GRG.

Belongs to the tetrahydrofolate dehydrogenase/cyclohydrolase family. In terms of assembly, homodimer.

It carries out the reaction (6R)-5,10-methylene-5,6,7,8-tetrahydrofolate + NADP(+) = (6R)-5,10-methenyltetrahydrofolate + NADPH. It catalyses the reaction (6R)-5,10-methenyltetrahydrofolate + H2O = (6R)-10-formyltetrahydrofolate + H(+). It functions in the pathway one-carbon metabolism; tetrahydrofolate interconversion. Functionally, catalyzes the oxidation of 5,10-methylenetetrahydrofolate to 5,10-methenyltetrahydrofolate and then the hydrolysis of 5,10-methenyltetrahydrofolate to 10-formyltetrahydrofolate. This Clavibacter michiganensis subsp. michiganensis (strain NCPPB 382) protein is Bifunctional protein FolD.